The chain runs to 122 residues: Large ribosomal subunit protein uL14 (122 aa).

Belongs to the universal ribosomal protein uL14 family. Part of the 50S ribosomal subunit. Forms a cluster with proteins L3 and L19. In the 70S ribosome, L14 and L19 interact and together make contacts with the 16S rRNA in bridges B5 and B8.

Functionally, binds to 23S rRNA. Forms part of two intersubunit bridges in the 70S ribosome. The chain is Large ribosomal subunit protein uL14 from Carsonella ruddii (strain PV).